The following is a 63-amino-acid chain: Anionic peptide NDBP7 (63 aa).

Positions Met-1–Ala-20 are cleaved as a signal peptide.

This sequence belongs to the non-disulfide-bridged peptide (NDBP) superfamily. Long chain multifunctional peptide (group 2) family. As to expression, expressed by the venom gland.

It is found in the secreted. The polypeptide is Anionic peptide NDBP7 (Lychas mucronatus (Chinese swimming scorpion)).